We begin with the raw amino-acid sequence, 360 residues long: Histidinol-phosphate aminotransferase (360 aa).

N6-(pyridoxal phosphate)lysine is present on Lys223.

Belongs to the class-II pyridoxal-phosphate-dependent aminotransferase family. Histidinol-phosphate aminotransferase subfamily. As to quaternary structure, homodimer. It depends on pyridoxal 5'-phosphate as a cofactor.

It carries out the reaction L-histidinol phosphate + 2-oxoglutarate = 3-(imidazol-4-yl)-2-oxopropyl phosphate + L-glutamate. The protein operates within amino-acid biosynthesis; L-histidine biosynthesis; L-histidine from 5-phospho-alpha-D-ribose 1-diphosphate: step 7/9. The polypeptide is Histidinol-phosphate aminotransferase (Bacillus subtilis subsp. natto).